We begin with the raw amino-acid sequence, 1117 residues long: Reverse gyrase (1117 aa).

The RG N-terminal-type zinc finger occupies 3–42; that stretch reads LATGAKYYHSCINCGGINTDTRNEKGLPCEVCLPFEDGDV. Residues cysteine 13, cysteine 16, cysteine 31, and cysteine 34 each coordinate Zn(2+). ATP-binding positions include glutamine 84 and 101–108; that span reads APTGVGKT. Residues 88–284 form the Helicase ATP-binding domain; the sequence is AKRLLLSKSF…LFRELLGFEI (197 aa). The DEAD box motif lies at 206–209; the sequence is DDVD. The topoisomerase I stretch occupies residues 551–1117; sequence KDMKSRMIIV…EELNEILIKN (567 aa). One can recognise a Toprim domain in the interval 555 to 712; that stretch reads SRMIIVESPT…NVQRIEMHEI (158 aa). Residue glutamate 561 participates in Mg(2+) binding. An RG C-terminal-type zinc finger spans residues 631-658; that stretch reads IKRCSSCGAQFTDELPRCPYCNSDKIDD. Zn(2+) is bound by residues cysteine 634, cysteine 637, cysteine 648, and cysteine 651. Position 681 (aspartate 681) interacts with Mg(2+). The Topo IA-type catalytic domain maps to 728–1114; the sequence is DVNLVKSQIV…NLYEELNEIL (387 aa). Tyrosine 864 (O-(5'-phospho-DNA)-tyrosine intermediate) is an active-site residue.

The protein in the N-terminal section; belongs to the DEAD box helicase family. DDVD subfamily. This sequence in the C-terminal section; belongs to the type IA topoisomerase family. As to quaternary structure, monomer. Zn(2+) is required as a cofactor. It depends on Mg(2+) as a cofactor.

It is found in the cytoplasm. It catalyses the reaction ATP + H2O = ADP + phosphate + H(+). In terms of biological role, modifies the topological state of DNA by introducing positive supercoils in an ATP-dependent process, increasing the linking number in steps of +1; also positively supercoils with dATP and ATP-gamma-S. With UTP or dTTP relaxes negatively supercoiled DNA, in the absence of any nucleotide partially relaxes negative supercoils. In the absence of nucleotide has a higher affinity for dsDNA with a single-stranded tail than dsDNA or ssDNA. Has an ATPase activity in the absence of DNA. Binds to single-stranded DNA, transiently cleaves and then rejoins the ends, introducing a positive supercoil in the process. The scissile phosphodiester is attacked by the catalytic tyrosine of the enzyme, resulting in the formation of a DNA-(5'-phosphotyrosyl)-enzyme intermediate. Probably involved in rewinding DNA strands in regions of the chromosome that have opened up to allow replication, transcription, DNA repair and/or for DNA protection. The polypeptide is Reverse gyrase (Caldanaerobacter subterraneus subsp. tengcongensis (strain DSM 15242 / JCM 11007 / NBRC 100824 / MB4) (Thermoanaerobacter tengcongensis)).